A 100-amino-acid polypeptide reads, in one-letter code: Urease subunit gamma (100 aa).

The protein belongs to the urease gamma subunit family. Heterotrimer of UreA (gamma), UreB (beta) and UreC (alpha) subunits. Three heterotrimers associate to form the active enzyme.

The protein localises to the cytoplasm. The catalysed reaction is urea + 2 H2O + H(+) = hydrogencarbonate + 2 NH4(+). The protein operates within nitrogen metabolism; urea degradation; CO(2) and NH(3) from urea (urease route): step 1/1. The chain is Urease subunit gamma from Chromohalobacter salexigens (strain ATCC BAA-138 / DSM 3043 / CIP 106854 / NCIMB 13768 / 1H11).